The sequence spans 930 residues: Isoleucine--tRNA ligase (930 aa).

Positions proline 57–histidine 67 match the 'HIGH' region motif. Position 554 (glutamate 554) interacts with L-isoleucyl-5'-AMP. Positions lysine 595 to serine 599 match the 'KMSKS' region motif. Lysine 598 serves as a coordination point for ATP. Positions 888, 891, 908, and 911 each coordinate Zn(2+).

It belongs to the class-I aminoacyl-tRNA synthetase family. IleS type 1 subfamily. Monomer. The cofactor is Zn(2+).

It localises to the cytoplasm. The catalysed reaction is tRNA(Ile) + L-isoleucine + ATP = L-isoleucyl-tRNA(Ile) + AMP + diphosphate. Catalyzes the attachment of isoleucine to tRNA(Ile). As IleRS can inadvertently accommodate and process structurally similar amino acids such as valine, to avoid such errors it has two additional distinct tRNA(Ile)-dependent editing activities. One activity is designated as 'pretransfer' editing and involves the hydrolysis of activated Val-AMP. The other activity is designated 'posttransfer' editing and involves deacylation of mischarged Val-tRNA(Ile). This is Isoleucine--tRNA ligase from Streptococcus pneumoniae (strain JJA).